A 349-amino-acid polypeptide reads, in one-letter code: UDP-N-acetylenolpyruvoylglucosamine reductase (349 aa).

Residues 17 to 187 enclose the FAD-binding PCMH-type domain; that stretch reads VNESADLIIQ…TAITLRLNKQ (171 aa). R163 is a catalytic residue. The Proton donor role is filled by S233. The active site involves E328.

It belongs to the MurB family. Requires FAD as cofactor.

The protein localises to the cytoplasm. It catalyses the reaction UDP-N-acetyl-alpha-D-muramate + NADP(+) = UDP-N-acetyl-3-O-(1-carboxyvinyl)-alpha-D-glucosamine + NADPH + H(+). The protein operates within cell wall biogenesis; peptidoglycan biosynthesis. In terms of biological role, cell wall formation. The chain is UDP-N-acetylenolpyruvoylglucosamine reductase from Aliivibrio fischeri (strain ATCC 700601 / ES114) (Vibrio fischeri).